The following is a 276-amino-acid chain: 2-dehydro-3-deoxyphosphooctonate aldolase (276 aa).

The protein belongs to the KdsA family.

It localises to the cytoplasm. The catalysed reaction is D-arabinose 5-phosphate + phosphoenolpyruvate + H2O = 3-deoxy-alpha-D-manno-2-octulosonate-8-phosphate + phosphate. It participates in carbohydrate biosynthesis; 3-deoxy-D-manno-octulosonate biosynthesis; 3-deoxy-D-manno-octulosonate from D-ribulose 5-phosphate: step 2/3. This is 2-dehydro-3-deoxyphosphooctonate aldolase from Stenotrophomonas maltophilia (strain K279a).